Consider the following 238-residue polypeptide: MGHEDAVYLAKLAEQAERYEEMVENMKVVASADVELTVEERNLLSVAYKNVIGARRASWRIVTSIEQKEESKGNESQVTLIKEYRQKIESELAKICDDILEVLDKHLIPSAQSGESKVFYHKMKGDYHRYLAEFAIGDRRKGAADASLEAYKAATEVAQTDLAPTHPIRLGLALNFSVFYYEILNSPDQACHLAKLAFDDAIAELDTLSEESYKDSTLIMQLLRDNLTLWTSSEPSRC.

The protein belongs to the 14-3-3 family.

In terms of biological role, 14-3-3 family protein that plays a role in the morphological differentiation and secondary metabolism biosynthesis. Required for normal fungal morphogenesis in an environment-dependent manner, affecting the balance between production of conidiophores and the formation of sclerotia, resistant structures that are necessary for the dissemination and survival. Acts as a positive regulator of conidiation and a negative regulator of sclerotial production. Also regulates the production of secondary metabolites such as aflatoxin, but also the indole-tetramic acid mycotoxin cyclopiazonic acid (CPA) and ustiloxin, an inhibitor of microtubule assembly. This Aspergillus flavus (strain ATCC 200026 / FGSC A1120 / IAM 13836 / NRRL 3357 / JCM 12722 / SRRC 167) protein is 14-3-3 family protein artA.